The primary structure comprises 284 residues: Diaminopimelate epimerase (284 aa).

Residues Asn14 and Asn67 each coordinate substrate. Residue Cys76 is the Proton donor of the active site. Residues 77-78, Asn166, Asn199, and 217-218 each bind substrate; these read GN and ER. Cys226 (proton acceptor) is an active-site residue. Residue 227–228 coordinates substrate; sequence GT.

This sequence belongs to the diaminopimelate epimerase family. In terms of assembly, homodimer.

The protein resides in the cytoplasm. It catalyses the reaction (2S,6S)-2,6-diaminopimelate = meso-2,6-diaminopimelate. It functions in the pathway amino-acid biosynthesis; L-lysine biosynthesis via DAP pathway; DL-2,6-diaminopimelate from LL-2,6-diaminopimelate: step 1/1. Catalyzes the stereoinversion of LL-2,6-diaminopimelate (L,L-DAP) to meso-diaminopimelate (meso-DAP), a precursor of L-lysine and an essential component of the bacterial peptidoglycan. This is Diaminopimelate epimerase from Bacillus velezensis (strain DSM 23117 / BGSC 10A6 / LMG 26770 / FZB42) (Bacillus amyloliquefaciens subsp. plantarum).